Consider the following 395-residue polypeptide: Putative F-box protein At5g42430 (395 aa).

Positions 4–53 (EENSDSIPIDLILEILSRLPAKSITRFHCVSKLWGSMLCRPYFNELFLTI) constitute an F-box domain.

The protein is Putative F-box protein At5g42430 of Arabidopsis thaliana (Mouse-ear cress).